Reading from the N-terminus, the 114-residue chain is uncharacterized protein (114 aa).

It localises to the mitochondrion. This is an uncharacterized protein from Arabidopsis thaliana (Mouse-ear cress).